Here is a 361-residue protein sequence, read N- to C-terminus: Protein RecA (361 aa).

77 to 84 (GPESSGKT) contributes to the ATP binding site.

Belongs to the RecA family.

It is found in the cytoplasm. Its function is as follows. Can catalyze the hydrolysis of ATP in the presence of single-stranded DNA, the ATP-dependent uptake of single-stranded DNA by duplex DNA, and the ATP-dependent hybridization of homologous single-stranded DNAs. It interacts with LexA causing its activation and leading to its autocatalytic cleavage. The chain is Protein RecA from Rhizobium etli.